The following is a 527-amino-acid chain: Bifunctional purine biosynthesis protein PurH (527 aa).

The region spanning 1-149 is the MGS-like domain; that stretch reads MASDFLPVRR…KNFARVAVAT (149 aa).

Belongs to the PurH family.

The enzyme catalyses (6R)-10-formyltetrahydrofolate + 5-amino-1-(5-phospho-beta-D-ribosyl)imidazole-4-carboxamide = 5-formamido-1-(5-phospho-D-ribosyl)imidazole-4-carboxamide + (6S)-5,6,7,8-tetrahydrofolate. The catalysed reaction is IMP + H2O = 5-formamido-1-(5-phospho-D-ribosyl)imidazole-4-carboxamide. Its pathway is purine metabolism; IMP biosynthesis via de novo pathway; 5-formamido-1-(5-phospho-D-ribosyl)imidazole-4-carboxamide from 5-amino-1-(5-phospho-D-ribosyl)imidazole-4-carboxamide (10-formyl THF route): step 1/1. It functions in the pathway purine metabolism; IMP biosynthesis via de novo pathway; IMP from 5-formamido-1-(5-phospho-D-ribosyl)imidazole-4-carboxamide: step 1/1. The chain is Bifunctional purine biosynthesis protein PurH from Xanthomonas oryzae pv. oryzae (strain PXO99A).